The sequence spans 260 residues: Triosephosphate isomerase (260 aa).

11-13 is a substrate binding site; sequence NWK. Histidine 103 acts as the Electrophile in catalysis. Glutamate 175 (proton acceptor) is an active-site residue. Substrate-binding positions include glycine 181, serine 220, and 241-242; that span reads GG.

The protein belongs to the triosephosphate isomerase family. Homodimer.

The protein localises to the cytoplasm. It catalyses the reaction D-glyceraldehyde 3-phosphate = dihydroxyacetone phosphate. Its pathway is carbohydrate biosynthesis; gluconeogenesis. It functions in the pathway carbohydrate degradation; glycolysis; D-glyceraldehyde 3-phosphate from glycerone phosphate: step 1/1. Its function is as follows. Involved in the gluconeogenesis. Catalyzes stereospecifically the conversion of dihydroxyacetone phosphate (DHAP) to D-glyceraldehyde-3-phosphate (G3P). The polypeptide is Triosephosphate isomerase (Shewanella loihica (strain ATCC BAA-1088 / PV-4)).